Here is a 375-residue protein sequence, read N- to C-terminus: Succinyl-diaminopimelate desuccinylase (375 aa).

His-66 contributes to the Zn(2+) binding site. Residue Asp-68 is part of the active site. Asp-99 serves as a coordination point for Zn(2+). The active-site Proton acceptor is Glu-133. Zn(2+)-binding residues include Glu-134, Glu-162, and His-348.

It belongs to the peptidase M20A family. DapE subfamily. Homodimer. Zn(2+) is required as a cofactor. The cofactor is Co(2+).

The catalysed reaction is N-succinyl-(2S,6S)-2,6-diaminopimelate + H2O = (2S,6S)-2,6-diaminopimelate + succinate. It functions in the pathway amino-acid biosynthesis; L-lysine biosynthesis via DAP pathway; LL-2,6-diaminopimelate from (S)-tetrahydrodipicolinate (succinylase route): step 3/3. In terms of biological role, catalyzes the hydrolysis of N-succinyl-L,L-diaminopimelic acid (SDAP), forming succinate and LL-2,6-diaminopimelate (DAP), an intermediate involved in the bacterial biosynthesis of lysine and meso-diaminopimelic acid, an essential component of bacterial cell walls. The sequence is that of Succinyl-diaminopimelate desuccinylase from Citrobacter koseri (strain ATCC BAA-895 / CDC 4225-83 / SGSC4696).